A 1260-amino-acid polypeptide reads, in one-letter code: Myosin-1 (1260 aa).

The 680-residue stretch at 34–713 (VGVSDLTLLS…TLFALEHMRD (680 aa)) folds into the Myosin motor domain. An ATP-binding site is contributed by 127–134 (GESGAGKT). Serine 355 carries the post-translational modification Phosphoserine. The actin-binding stretch occupies residues 402-484 (SIGILDIYGF…PGIFATLDDS (83 aa)). IQ domains follow at residues 717-737 (YNMA…RIDS) and 738-763 (AIKI…YGHR). Residues 769–959 (KERRAMSLLG…TISVRQGRPA (191 aa)) enclose the TH1 domain. 2 stretches are compositionally biased toward polar residues: residues 948–963 (SSTI…NSRQ) and 972–988 (TLLS…SKGY). The disordered stretch occupies residues 948–1106 (SSTISVRQGR…PPPPTKQNIP (159 aa)). Positions 989-1013 (GQQQHAQPSYGQQQQQQQRYAPQSH) are enriched in low complexity. Polar residues predominate over residues 1030 to 1064 (QQNFAASAAQTAYHPQQASHARVPSTNNAHTQHNR). Positions 1065-1082 (QPAQQAAQPVQQAAQPAA) are enriched in low complexity. The segment covering 1092–1101 (APPPPPPPPT) has biased composition (pro residues). Residues 1103–1165 (QNIPKFQAAY…PTNYIVEYKE (63 aa)) form the SH3 domain.

It belongs to the TRAFAC class myosin-kinesin ATPase superfamily. Myosin family. In terms of processing, phosphorylation of the TEDS site (Ser-355) is required for the polarization of the actin cytoskeleton. Phosphorylation probably activates the myosin-I ATPase activity.

Its subcellular location is the cytoplasm. The protein resides in the cytoskeleton. The protein localises to the actin patch. Type-I myosin implicated in the organization of the actin cytoskeleton. Required for proper actin cytoskeleton polarization. At the cell cortex, assembles in patch-like structures together with proteins from the actin-polymerizing machinery and promotes actin assembly. Functions as actin nucleation-promoting factor (NPF) for the Arp2/3 complex. In Kluyveromyces lactis (strain ATCC 8585 / CBS 2359 / DSM 70799 / NBRC 1267 / NRRL Y-1140 / WM37) (Yeast), this protein is Myosin-1 (MYO1).